We begin with the raw amino-acid sequence, 232 residues long: Charged multivesicular body protein 4c (232 aa).

Disordered regions lie at residues Met-1–Gln-23 and Glu-172–Thr-232. An intramolecular interaction with C-terminus region spans residues Met-1–Val-153. The span at Ser-11–Gln-23 shows a compositional bias: low complexity. 2 coiled-coil regions span residues Ser-21–Glu-50 and Leu-125–Ser-182. The intramolecular interaction with N-terminus stretch occupies residues Gln-154–Thr-232. Ser-210 is modified (phosphoserine; by AURKB).

This sequence belongs to the SNF7 family. Probable core component of the endosomal sorting required for transport complex III (ESCRT-III). ESCRT-III components are thought to multimerize to form a flat lattice on the perimeter membrane of the endosome. Several assembly forms of ESCRT-III may exist that interact and act sequentially. Self-associates. Interacts with CHMP2A. Interacts with CHMP4A. Interacts with CHMP4B. Interacts with CHMP6. Interacts with VPS4A. Interacts with PDCD6IP; the interaction is direct. In terms of processing, phosphorylated at Ser-210 by AURKB during cytokinesis: together with ZFYVE19/ANCHR, phosphorylated CHMP4C retains abscission-competent VPS4 (VPS4A and/or VPS4B) at the midbody ring until abscission checkpoint signaling is terminated at late cytokinesis.

Its subcellular location is the cytoplasm. It is found in the cytosol. It localises to the late endosome membrane. The protein resides in the midbody. The protein localises to the midbody ring. In terms of biological role, probable core component of the endosomal sorting required for transport complex III (ESCRT-III) which is involved in multivesicular bodies (MVBs) formation and sorting of endosomal cargo proteins into MVBs. MVBs contain intraluminal vesicles (ILVs) that are generated by invagination and scission from the limiting membrane of the endosome and mostly are delivered to lysosomes enabling degradation of membrane proteins, such as stimulated growth factor receptors, lysosomal enzymes and lipids. The MVB pathway appears to require the sequential function of ESCRT-O, -I,-II and -III complexes. ESCRT-III proteins mostly dissociate from the invaginating membrane before the ILV is released. The ESCRT machinery also functions in topologically equivalent membrane fission events, such as the terminal stages of cytokinesis. Key component of the cytokinesis checkpoint, a process required to delay abscission to prevent both premature resolution of intercellular chromosome bridges and accumulation of DNA damage: upon phosphorylation by AURKB, together with ZFYVE19/ANCHR, retains abscission-competent VPS4 (VPS4A and/or VPS4B) at the midbody ring until abscission checkpoint signaling is terminated at late cytokinesis. Deactivation of AURKB results in dephosphorylation of CHMP4C followed by its dissociation from ANCHR and VPS4 and subsequent abscission. ESCRT-III proteins are believed to mediate the necessary vesicle extrusion and/or membrane fission activities, possibly in conjunction with the AAA ATPase VPS4. CHMP4A/B/C are required for the exosomal release of SDCBP, CD63 and syndecan. In Rattus norvegicus (Rat), this protein is Charged multivesicular body protein 4c (Chmp4c).